A 473-amino-acid chain; its full sequence is Zinc finger and SCAN domain-containing protein 21 (473 aa).

Residue Lys27 forms a Glycyl lysine isopeptide (Lys-Gly) (interchain with G-Cter in SUMO2) linkage. The 83-residue stretch at 45 to 127 (RQRFRQFGYH…TLLEDLEREL (83 aa)) folds into the SCAN box domain. The tract at residues 127–169 (LDEPGHQVSTPPNEQKPVWEKISSSGTAKESPSSMQPQPLETS) is disordered. The segment covering 148 to 167 (ISSSGTAKESPSSMQPQPLE) has biased composition (polar residues). Residues Lys221 and Lys232 each participate in a glycyl lysine isopeptide (Lys-Gly) (interchain with G-Cter in SUMO2) cross-link. Residues 244–272 (LENEKGTKPPLQEAGSKKGRESVPTKPTP) are disordered. The segment covering 258–272 (GSKKGRESVPTKPTP) has biased composition (basic and acidic residues). 7 consecutive C2H2-type zinc fingers follow at residues 277–299 (YICAECGKAFSNSSNLTKHRRTH), 305–327 (YVCTKCGKAFSHSSNLTLHYRTH), 333–354 (YDCKCGKAFGQSSDLLKHQRMH), 360–382 (YQCKDCGKAFSGKGSLIRHYRIH), 388–410 (YQCNECGKSFSQHAGLSSHQRLH), 416–438 (YKCKECGKAFNHSSNFNKHHRIH), and 444–466 (YWCHHCGKTFCSKSNLSKHQRVH). Lys349 is covalently cross-linked (Glycyl lysine isopeptide (Lys-Gly) (interchain with G-Cter in SUMO2)).

The protein belongs to the krueppel C2H2-type zinc-finger protein family.

It localises to the nucleus. Strong transcriptional activator. Plays an important role in spermatogenesis; essential for the progression of meiotic prophase I in spermatocytes. In Homo sapiens (Human), this protein is Zinc finger and SCAN domain-containing protein 21 (ZSCAN21).